The sequence spans 208 residues: Uracil phosphoribosyltransferase (208 aa).

Residues Arg-77, Arg-102, and 129–137 (DPMLATGNS) contribute to the 5-phospho-alpha-D-ribose 1-diphosphate site. Residues Ile-193 and 198–200 (GDA) contribute to the uracil site. Asp-199 provides a ligand contact to 5-phospho-alpha-D-ribose 1-diphosphate.

It belongs to the UPRTase family. It depends on Mg(2+) as a cofactor.

The catalysed reaction is UMP + diphosphate = 5-phospho-alpha-D-ribose 1-diphosphate + uracil. It participates in pyrimidine metabolism; UMP biosynthesis via salvage pathway; UMP from uracil: step 1/1. Allosterically activated by GTP. Its function is as follows. Catalyzes the conversion of uracil and 5-phospho-alpha-D-ribose 1-diphosphate (PRPP) to UMP and diphosphate. This is Uracil phosphoribosyltransferase from Mycoplasmopsis pulmonis (strain UAB CTIP) (Mycoplasma pulmonis).